Reading from the N-terminus, the 482-residue chain is UDP-N-acetylmuramate--L-alanine ligase (482 aa).

Residue 123-129 participates in ATP binding; sequence GTHGKTT.

This sequence belongs to the MurCDEF family.

The protein localises to the cytoplasm. The catalysed reaction is UDP-N-acetyl-alpha-D-muramate + L-alanine + ATP = UDP-N-acetyl-alpha-D-muramoyl-L-alanine + ADP + phosphate + H(+). It functions in the pathway cell wall biogenesis; peptidoglycan biosynthesis. Functionally, cell wall formation. The chain is UDP-N-acetylmuramate--L-alanine ligase from Pseudomonas putida (strain W619).